Consider the following 120-residue polypeptide: Ribosome-binding factor A (120 aa).

The protein belongs to the RbfA family. In terms of assembly, monomer. Binds 30S ribosomal subunits, but not 50S ribosomal subunits or 70S ribosomes.

It localises to the cytoplasm. In terms of biological role, one of several proteins that assist in the late maturation steps of the functional core of the 30S ribosomal subunit. Associates with free 30S ribosomal subunits (but not with 30S subunits that are part of 70S ribosomes or polysomes). Required for efficient processing of 16S rRNA. May interact with the 5'-terminal helix region of 16S rRNA. This chain is Ribosome-binding factor A, found in Desulforamulus reducens (strain ATCC BAA-1160 / DSM 100696 / MI-1) (Desulfotomaculum reducens).